We begin with the raw amino-acid sequence, 92 residues long: MANTTSAKKATRKIARRTDVNKARRSRVRTFVRQVEEAIASGDADKAKAAFLAAQPELARAASKGVLHSNTASRKVSRLAARVKALSVSATA.

Positions 1–23 (MANTTSAKKATRKIARRTDVNKA) are disordered.

This sequence belongs to the bacterial ribosomal protein bS20 family.

Binds directly to 16S ribosomal RNA. The protein is Small ribosomal subunit protein bS20 of Rhizobium etli (strain CIAT 652).